Here is a 156-residue protein sequence, read N- to C-terminus: Protein CROC-4 (156 aa).

The segment at 46–71 (RATSSTTDSSRAPSSPRPPGSTSHCG) is disordered. Over residues 48 to 59 (TSSTTDSSRAPS) the composition is skewed to low complexity.

Expressed throughout the brain in the thalamus, subthalamic nucleus, corpus callosum, hippocampus, substantia nigra, caudate nucleus, and amygdala.

The protein localises to the nucleus. In terms of biological role, may play a role in FOS signaling pathways involved in development and remodeling of neurons. Promotes transcription of the FOS promoter. The protein is Protein CROC-4 of Homo sapiens (Human).